Consider the following 344-residue polypeptide: Tetraacyldisaccharide 4'-kinase (344 aa).

68-75 (TAGGNGKT) provides a ligand contact to ATP.

Belongs to the LpxK family.

It carries out the reaction a lipid A disaccharide + ATP = a lipid IVA + ADP + H(+). The protein operates within glycolipid biosynthesis; lipid IV(A) biosynthesis; lipid IV(A) from (3R)-3-hydroxytetradecanoyl-[acyl-carrier-protein] and UDP-N-acetyl-alpha-D-glucosamine: step 6/6. In terms of biological role, transfers the gamma-phosphate of ATP to the 4'-position of a tetraacyldisaccharide 1-phosphate intermediate (termed DS-1-P) to form tetraacyldisaccharide 1,4'-bis-phosphate (lipid IVA). The sequence is that of Tetraacyldisaccharide 4'-kinase from Photobacterium profundum (strain SS9).